A 327-amino-acid polypeptide reads, in one-letter code: Eukaryotic translation initiation factor 3 subunit I (327 aa).

WD repeat units lie at residues 8–49, 51–89, 188–227, 229–268, and 285–324; these read GHER…GSYD, HNGA…CIYT, VHRY…KLKQ, KSER…GHFE, and GHFG…LGFT.

It belongs to the eIF-3 subunit I family. In terms of assembly, component of the eukaryotic translation initiation factor 3 (eIF-3) complex.

The protein localises to the cytoplasm. Functionally, component of the eukaryotic translation initiation factor 3 (eIF-3) complex, which is involved in protein synthesis of a specialized repertoire of mRNAs and, together with other initiation factors, stimulates binding of mRNA and methionyl-tRNAi to the 40S ribosome. The eIF-3 complex specifically targets and initiates translation of a subset of mRNAs involved in cell proliferation. The chain is Eukaryotic translation initiation factor 3 subunit I from Caenorhabditis briggsae.